The sequence spans 181 residues: Transcription antitermination protein NusB (181 aa).

A disordered region spans residues 1–36 (MTEDNNKAAGAKPRPARQVRTGLTSTGARKASAKSN).

It belongs to the NusB family.

Its function is as follows. Involved in transcription antitermination. Required for transcription of ribosomal RNA (rRNA) genes. Binds specifically to the boxA antiterminator sequence of the ribosomal RNA (rrn) operons. This chain is Transcription antitermination protein NusB, found in Variovorax paradoxus (strain S110).